The sequence spans 961 residues: Rho guanine nucleotide exchange factor 2 (961 aa).

The Phorbol-ester/DAG-type zinc finger occupies 12–59 (GHLFTTISVSGMTMCYACNKSITAKEALICPTCNVTIHNRCKDTLANC). Residues serine 82, serine 95, serine 102, serine 106, serine 110, serine 124, serine 136, serine 145, serine 147, and serine 150 each carry the phosphoserine modification. Positions 104 to 134 (RQSLLGSRRGRSPLSLAKSVSTTNIAGHFND) are interaction with DYNLT1. A DH domain is found at 209–406 (KQQDVIYELI…KELLSNVDQD (198 aa)). At lysine 327 the chain carries N6-acetyllysine. The 100-residue stretch at 446 to 545 (KLIHDGCLLW…WIRVIQQSVR (100 aa)) folds into the PH domain. Residues 561–588 (EAYLRRIKMELQQKDRALVELLQEKVGL) are a coiled coil. Phosphoserine occurs at positions 619 and 622. Position 653 is a phosphothreonine; by MAPK1 or MAPK3 (threonine 653). Residues 659–679 (LPVETDSGGNTSPGVTANGEA) form a disordered region. 4 positions are modified to phosphoserine: serine 665, serine 670, serine 685, and serine 756. Positions 742–761 (PEGPERREKLTRANSRDGEA) are enriched in basic and acidic residues. Residues 742–770 (PEGPERREKLTRANSRDGEAGRAGAAPVA) are disordered. The stretch at 772-841 (EKQATELALL…RQLAALGHTE (70 aa)) forms a coiled coil. Phosphoserine; by PAK1 and AURKA is present on serine 860. Residues 867–961 (LYLSFTPPQP…RDGEPVASES (95 aa)) are disordered. Phosphotyrosine is present on tyrosine 868. Serine 870 is modified (phosphoserine; by PAK4). Over residues 894 to 913 (RPFEDRERQELGSPDERLQD) the composition is skewed to basic and acidic residues. Phosphoserine is present on residues serine 906, serine 914, and serine 915. Acidic residues predominate over residues 915-925 (SDPDTGSEEEG). Threonine 919 carries the post-translational modification Phosphothreonine. A phosphoserine mark is found at serine 921, serine 927, serine 928, and serine 931. At serine 935 the chain carries Phosphoserine; by CDK1.

As to quaternary structure, found in a complex composed at least of ARHGEF2, NOD2 and RIPK2. Interacts with RIPK2; the interaction mediates tyrosine phosphorylation of RIPK2 by Src kinase CSK. Interacts with RIPK1 and RIPK3. Interacts with YWHAZ/14-3-3 zeta; when phosphorylated at Ser-860. Interacts with the kinases PAK4, AURKA and MAPK1. Interacts with RHOA and RAC1. Interacts with NOD1. Interacts (via the N- terminal zinc finger) with CAPN6 (via domain II). Interacts with DYNLT1. In terms of processing, phosphorylation of Ser-860 by PAK1 induces binding to protein YWHAZ, promoting its relocation to microtubules and the inhibition of its activity. Phosphorylated by AURKA and CDK1 during mitosis, which negatively regulates its activity. Phosphorylation by MAPK1 or MAPK3 increases nucleotide exchange activity. Phosphorylation by PAK4 releases GEF-H1 from the microtubules. Phosphorylated on serine, threonine and tyrosine residues in a RIPK2-dependent manner.

The protein localises to the cytoplasm. It localises to the cytoskeleton. Its subcellular location is the cell junction. The protein resides in the tight junction. It is found in the golgi apparatus. The protein localises to the spindle. It localises to the cytoplasmic vesicle. Activates Rho-GTPases by promoting the exchange of GDP for GTP. May be involved in epithelial barrier permeability, cell motility and polarization, dendritic spine morphology, antigen presentation, leukemic cell differentiation, cell cycle regulation, innate immune response, and cancer. Binds Rac-GTPases, but does not seem to promote nucleotide exchange activity toward Rac-GTPases. May stimulate instead the cortical activity of Rac. Inactive toward CDC42, TC10, or Ras-GTPases. Forms an intracellular sensing system along with NOD1 for the detection of microbial effectors during cell invasion by pathogens. Involved in innate immune signaling transduction pathway promoting cytokine IL6/interleukin-6 and TNF-alpha secretion in macrophage upon stimulation by bacterial peptidoglycans; acts as a signaling intermediate between NOD2 receptor and RIPK2 kinase. Contributes to the tyrosine phosphorylation of RIPK2 through Src tyrosine kinase leading to NF-kappaB activation by NOD2. Overexpression activates Rho-, but not Rac-GTPases, and increases paracellular permeability. Involved in neuronal progenitor cell division and differentiation. Involved in the migration of precerebellar neurons. This chain is Rho guanine nucleotide exchange factor 2 (ARHGEF2), found in Sus scrofa (Pig).